The chain runs to 122 residues: Large ribosomal subunit protein uL14c (122 aa).

The protein belongs to the universal ribosomal protein uL14 family. Part of the 50S ribosomal subunit.

The protein resides in the plastid. Its function is as follows. Binds to 23S rRNA. This Cuscuta exaltata (Tall dodder) protein is Large ribosomal subunit protein uL14c.